The chain runs to 98 residues: Peptide YY (98 aa).

Positions 1–28 are cleaved as a signal peptide; sequence MVAVRRPWPVMVAMLLVLLACLGALVDA. A Phosphoserine modification is found at Ser41. Tyr64 is modified (tyrosine amide). Positions 68-98 are excised as a propeptide; that stretch reads EVPAALFSKLLFTDDSENLPFRSRPEGVDQW.

The protein belongs to the NPY family. In terms of processing, the peptide YY form is cleaved at Pro-30 by the prolyl endopeptidase FAP (seprase) activity (in vitro) to generate peptide YY(3-36).

The protein localises to the secreted. In terms of biological role, this gut peptide inhibits exocrine pancreatic secretion, has a vasoconstrictory action and inhibitis jejunal and colonic mobility. This Rattus norvegicus (Rat) protein is Peptide YY (Pyy).